The chain runs to 75 residues: Large ribosomal subunit protein bL28 (75 aa).

This sequence belongs to the bacterial ribosomal protein bL28 family.

The chain is Large ribosomal subunit protein bL28 from Baumannia cicadellinicola subsp. Homalodisca coagulata.